The chain runs to 188 residues: MAIEQAWFMEENDEDQRLPHHRNPKQFVSLDHLADLGVLYWKLNPKDYENDQELKEIRESRGYNYMDLLDLCPERVENYEEKLKNFYTEHIHGDEEIRYCLEGSGYFDVRDKEDRWIRIWIKEGDMIVLPAGIYHRFTLDTGNYVKLMRLFVGEPVWTAYNRPQEHHPARKNYINNVTHKVGVPLEAH.

4 residues coordinate Fe(2+): histidine 90, histidine 92, glutamate 96, and histidine 135. Ni(2+)-binding residues include histidine 90, histidine 92, glutamate 96, and histidine 135.

This sequence belongs to the acireductone dioxygenase (ARD) family. Fe(2+) is required as a cofactor. The cofactor is Ni(2+).

It localises to the cytoplasm. Its subcellular location is the nucleus. The enzyme catalyses 1,2-dihydroxy-5-(methylsulfanyl)pent-1-en-3-one + O2 = 4-methylsulfanyl-2-oxobutanoate + formate + 2 H(+). It catalyses the reaction 1,2-dihydroxy-5-(methylsulfanyl)pent-1-en-3-one + O2 = 3-(methylsulfanyl)propanoate + CO + formate + 2 H(+). It functions in the pathway amino-acid biosynthesis; L-methionine biosynthesis via salvage pathway; L-methionine from S-methyl-5-thio-alpha-D-ribose 1-phosphate: step 5/6. Its function is as follows. Catalyzes 2 different reactions between oxygen and the acireductone 1,2-dihydroxy-3-keto-5-methylthiopentene (DHK-MTPene) depending upon the metal bound in the active site. Fe-containing acireductone dioxygenase (Fe-ARD) produces formate and 2-keto-4-methylthiobutyrate (KMTB), the alpha-ketoacid precursor of methionine in the methionine recycle pathway. Ni-containing acireductone dioxygenase (Ni-ARD) produces methylthiopropionate, carbon monoxide and formate, and does not lie on the methionine recycle pathway. The chain is Acireductone dioxygenase 1 from Vitis vinifera (Grape).